A 92-amino-acid polypeptide reads, in one-letter code: Phosphoribosyl-ATP pyrophosphatase (92 aa).

It belongs to the PRA-PH family.

Its subcellular location is the cytoplasm. It carries out the reaction 1-(5-phospho-beta-D-ribosyl)-ATP + H2O = 1-(5-phospho-beta-D-ribosyl)-5'-AMP + diphosphate + H(+). The protein operates within amino-acid biosynthesis; L-histidine biosynthesis; L-histidine from 5-phospho-alpha-D-ribose 1-diphosphate: step 2/9. This Leptospira borgpetersenii serovar Hardjo-bovis (strain JB197) protein is Phosphoribosyl-ATP pyrophosphatase.